We begin with the raw amino-acid sequence, 121 residues long: Large ribosomal subunit protein bL20 (121 aa).

The protein belongs to the bacterial ribosomal protein bL20 family.

In terms of biological role, binds directly to 23S ribosomal RNA and is necessary for the in vitro assembly process of the 50S ribosomal subunit. It is not involved in the protein synthesizing functions of that subunit. This is Large ribosomal subunit protein bL20 from Dinoroseobacter shibae (strain DSM 16493 / NCIMB 14021 / DFL 12).